Reading from the N-terminus, the 112-residue chain is Integration host factor subunit alpha (112 aa).

Belongs to the bacterial histone-like protein family. As to quaternary structure, heterodimer of an alpha and a beta chain.

Functionally, this protein is one of the two subunits of integration host factor, a specific DNA-binding protein that functions in genetic recombination as well as in transcriptional and translational control. The polypeptide is Integration host factor subunit alpha (Rhizobium etli (strain ATCC 51251 / DSM 11541 / JCM 21823 / NBRC 15573 / CFN 42)).